The primary structure comprises 405 residues: BRCA1-A complex subunit Abraxas 1 (405 aa).

The MPN domain maps to 7 to 153 (SALLSGFVFG…CSTYRLEHAL (147 aa)). Positions 208–262 (SLQEVHKINEMYATLQEELKKMCSDVEVSERSVEKLLTEVSQLKEEINRKKQHKI) form a coiled coil. Residues 365-405 (LHQDEEDCNQETKLALSSAETDEEALENPKDTNEYSYSPTF) are disordered. Phosphoserine is present on serine 402. Residues 402–405 (SPTF) carry the pSXXF motif motif.

The protein belongs to the FAM175 family. Abraxas subfamily. Component of the BRCA1-A complex. Component of the BRISC complex. Homodimer. Interacts directly (when phosphorylated at Ser-402) with BRCA1. The phosphorylated homodimer can interact directly with two BRCA1 chains, giving rise to a heterotetramer. In terms of processing, phosphorylation of Ser-402 of the pSXXF motif by ATM or ATR constitutes a specific recognition motif for the BRCT domain of BRCA1.

The protein localises to the nucleus. Its function is as follows. Involved in DNA damage response and double-strand break (DSB) repair. Component of the BRCA1-A complex, acting as a central scaffold protein that assembles the various components of the complex and mediates the recruitment of BRCA1. The BRCA1-A complex specifically recognizes 'Lys-63'-linked ubiquitinated histones H2A and H2AX at DNA lesion sites, leading to target the BRCA1-BARD1 heterodimer to sites of DNA damage at DSBs. This complex also possesses deubiquitinase activity that specifically removes 'Lys-63'-linked ubiquitin on histones H2A and H2AX. The polypeptide is BRCA1-A complex subunit Abraxas 1 (Gallus gallus (Chicken)).